The primary structure comprises 142 residues: Large ribosomal subunit protein uL13 (142 aa).

It belongs to the universal ribosomal protein uL13 family. In terms of assembly, part of the 50S ribosomal subunit.

Its function is as follows. This protein is one of the early assembly proteins of the 50S ribosomal subunit, although it is not seen to bind rRNA by itself. It is important during the early stages of 50S assembly. This Pectobacterium carotovorum subsp. carotovorum (strain PC1) protein is Large ribosomal subunit protein uL13.